The primary structure comprises 902 residues: Transcription factor E2F7 (902 aa).

A Phosphoserine modification is found at Ser96. A DNA-binding region spans residues 143 to 212 (RKQKSLGLLC…VAKNQYGWHG (70 aa)). Basic and acidic residues predominate over residues 253–269 (ERRKDGSPDPRDQHLLD). The interval 253–283 (ERRKDGSPDPRDQHLLDFSESDYPSSSANSR) is disordered. Residues 283-368 (RKDKSLRIMS…GRKPAFKWIG (86 aa)) mediate DNA binding. Ser411 is modified (phosphoserine). Disordered stretches follow at residues 418–439 (SEKI…KQGP), 589–627 (LCEE…SNST), and 665–690 (NGFI…DNEI). Composition is skewed to basic and acidic residues over residues 589–611 (LCEE…REFE) and 679–690 (PDTEKSSNDNEI). Position 832 is a phosphoserine (Ser832). The tract at residues 844–902 (KAEQSPAPATPKSIQRRHRETFFKTPGSLGDPAFRRERNQSRNTSSAQRRLEISSSGPD) is disordered. Positions 884-902 (SRNTSSAQRRLEISSSGPD) are enriched in polar residues.

It belongs to the E2F/DP family. Homodimer and heterodimer: mainly forms homodimers and, to a lesser extent, heterodimers with E2F8. Dimerization is important for DNA-binding. Interacts with HIF1A. Interacts with MN1.

It localises to the nucleus. Functionally, atypical E2F transcription factor that participates in various processes such as angiogenesis, polyploidization of specialized cells and DNA damage response. Mainly acts as a transcription repressor that binds DNA independently of DP proteins and specifically recognizes the E2 recognition site 5'-TTTC[CG]CGC-3'. Directly represses transcription of classical E2F transcription factors such as E2F1. Acts as a regulator of S-phase by recognizing and binding the E2-related site 5'-TTCCCGCC-3' and mediating repression of G1/S-regulated genes. Plays a key role in polyploidization of cells in placenta and liver by regulating the endocycle, probably by repressing genes promoting cytokinesis and antagonizing action of classical E2F proteins (E2F1, E2F2 and/or E2F3). Required for placental development by promoting polyploidization of trophoblast giant cells. Also involved in DNA damage response: up-regulated by p53/TP53 following genotoxic stress and acts as a downstream effector of p53/TP53-dependent repression by mediating repression of indirect p53/TP53 target genes involved in DNA replication. Acts as a promoter of sprouting angiogenesis, possibly by acting as a transcription activator: associates with HIF1A, recognizes and binds the VEGFA promoter, which is different from canonical E2 recognition site, and activates expression of the VEGFA gene. Acts as a negative regulator of keratinocyte differentiation. This chain is Transcription factor E2F7 (E2f7), found in Rattus norvegicus (Rat).